Reading from the N-terminus, the 405-residue chain is Magnesium-protoporphyrin IX monomethyl ester [oxidative] cyclase, chloroplastic (405 aa).

A chloroplast-targeting transit peptide spans 1-44 (MAAEMALVKPITPKFINPMRTFSSSSKFSTIKMSATSQSNTTTT). A compositionally biased stretch (low complexity) spans 33 to 47 (MSATSQSNTTTTATK). Residues 33-54 (MSATSQSNTTTTATKPSKKGNK) form a disordered region.

It belongs to the AcsF family. The cofactor is Fe cation.

The protein localises to the plastid. It is found in the chloroplast. It catalyses the reaction Mg-protoporphyrin IX 13-monomethyl ester + 3 NADPH + 3 O2 + 2 H(+) = 3,8-divinyl protochlorophyllide a + 3 NADP(+) + 5 H2O. Its pathway is porphyrin-containing compound metabolism; chlorophyll biosynthesis. Catalyzes the formation of the isocyclic ring in chlorophyll biosynthesis. Mediates the cyclase reaction, which results in the formation of divinylprotochlorophyllide (Pchlide) characteristic of all chlorophylls from magnesium-protoporphyrin IX 13-monomethyl ester (MgPMME). This chain is Magnesium-protoporphyrin IX monomethyl ester [oxidative] cyclase, chloroplastic (CRD1), found in Euphorbia esula (Leafy spurge).